Consider the following 194-residue polypeptide: Thymidylate kinase (194 aa).

7–14 (GIDTAGKS) contributes to the ATP binding site.

Belongs to the thymidylate kinase family.

The catalysed reaction is dTMP + ATP = dTDP + ADP. In terms of biological role, phosphorylation of dTMP to form dTDP in both de novo and salvage pathways of dTTP synthesis. This Nautilia profundicola (strain ATCC BAA-1463 / DSM 18972 / AmH) protein is Thymidylate kinase.